Here is a 521-residue protein sequence, read N- to C-terminus: SET and MYND domain-containing protein DDB_G0292140 (521 aa).

Positions 1–101 are disordered; sequence MDGVIESPSN…KIKKSKKSIK (101 aa). Over residues 12 to 55 the composition is skewed to low complexity; sequence TIKISPSTSDSSTTTPIITTPPTQSTATVTTKAAATTTTTEAST. The segment covering 56–65 has biased composition (pro residues); that stretch reads TPPPPQPTPT. Positions 66-90 are enriched in low complexity; sequence PTQSTATVTKEVETTTETIPPIVTK. Residues 91 to 101 show a composition bias toward basic residues; the sequence is GKIKKSKKSIK. The SET domain occupies 122–406; sequence WPIHVYSHPI…EGDELTISYI (285 aa). The Zn(2+) site is built by C167, C170, C188, C191, C197, C201, H209, and C213. The MYND-type zinc finger occupies 167–213; the sequence is CQHCFLEVPLNQQILPTDFYMCEGCQRVGYCSANCRCIDYSQHRFEC. The disordered stretch occupies residues 442–521; sequence QTGTLEKDDD…QDHQNNDKSN (80 aa). Residues 448–469 show a composition bias toward acidic residues; sequence KDDDDNDDEKEKMDEDDDEKDD. Over residues 470 to 485 the composition is skewed to basic and acidic residues; that stretch reads DINNKNDKKSKYKSDG. Over residues 486 to 495 the composition is skewed to acidic residues; it reads STDDEEDEDN. Over residues 497 to 514 the composition is skewed to low complexity; it reads NNKNNNKNKNNNSNNQDH.

Belongs to the class V-like SAM-binding methyltransferase superfamily.

Functionally, probable methyltransferase. This Dictyostelium discoideum (Social amoeba) protein is SET and MYND domain-containing protein DDB_G0292140.